We begin with the raw amino-acid sequence, 240 residues long: Sugar fermentation stimulation protein homolog (240 aa).

This sequence belongs to the SfsA family.

In Saccharolobus solfataricus (strain ATCC 35092 / DSM 1617 / JCM 11322 / P2) (Sulfolobus solfataricus), this protein is Sugar fermentation stimulation protein homolog.